Here is a 161-residue protein sequence, read N- to C-terminus: 2-C-methyl-D-erythritol 2,4-cyclodiphosphate synthase (161 aa).

The a divalent metal cation site is built by D10 and H12. 4-CDP-2-C-methyl-D-erythritol 2-phosphate is bound by residues 10 to 12 (DVH) and 36 to 37 (HS). Position 44 (H44) interacts with a divalent metal cation. 4-CDP-2-C-methyl-D-erythritol 2-phosphate contacts are provided by residues 58-60 (DIG), 63-67 (FPDTD), 134-137 (TTTE), F141, and R144.

Belongs to the IspF family. Homotrimer. The cofactor is a divalent metal cation.

It carries out the reaction 4-CDP-2-C-methyl-D-erythritol 2-phosphate = 2-C-methyl-D-erythritol 2,4-cyclic diphosphate + CMP. The protein operates within isoprenoid biosynthesis; isopentenyl diphosphate biosynthesis via DXP pathway; isopentenyl diphosphate from 1-deoxy-D-xylulose 5-phosphate: step 4/6. Involved in the biosynthesis of isopentenyl diphosphate (IPP) and dimethylallyl diphosphate (DMAPP), two major building blocks of isoprenoid compounds. Catalyzes the conversion of 4-diphosphocytidyl-2-C-methyl-D-erythritol 2-phosphate (CDP-ME2P) to 2-C-methyl-D-erythritol 2,4-cyclodiphosphate (ME-CPP) with a corresponding release of cytidine 5-monophosphate (CMP). This Shewanella putrefaciens (strain CN-32 / ATCC BAA-453) protein is 2-C-methyl-D-erythritol 2,4-cyclodiphosphate synthase.